A 203-amino-acid polypeptide reads, in one-letter code: Proteasome subunit beta 2 (203 aa).

Positions M1 to A9 are cleaved as a propeptide — removed in mature form; by autocatalysis. The active-site Nucleophile is the T10.

This sequence belongs to the peptidase T1B family. The 20S proteasome core is composed of 14 alpha and 14 beta subunits that assemble into four stacked heptameric rings, resulting in a barrel-shaped structure. The two inner rings, each composed of seven catalytic beta subunits, are sandwiched by two outer rings, each composed of seven alpha subunits. The catalytic chamber with the active sites is on the inside of the barrel. Has a gated structure, the ends of the cylinder being occluded by the N-termini of the alpha-subunits. Is capped at one or both ends by the proteasome regulatory ATPase, PAN.

The protein resides in the cytoplasm. The catalysed reaction is Cleavage of peptide bonds with very broad specificity.. With respect to regulation, the formation of the proteasomal ATPase PAN-20S proteasome complex, via the docking of the C-termini of PAN into the intersubunit pockets in the alpha-rings, triggers opening of the gate for substrate entry. Interconversion between the open-gate and close-gate conformations leads to a dynamic regulation of the 20S proteasome proteolysis activity. Functionally, component of the proteasome core, a large protease complex with broad specificity involved in protein degradation. This chain is Proteasome subunit beta 2, found in Pyrobaculum aerophilum (strain ATCC 51768 / DSM 7523 / JCM 9630 / CIP 104966 / NBRC 100827 / IM2).